A 407-amino-acid polypeptide reads, in one-letter code: MKVVSCNYRVKNVKDIETPTYTILTNNITPEYINLELLRKIDKKFIINCSLLEIYNNLDVFEKVKEYFSSNKTNEVSGHYLHEFCDFQDSYRYLNIRNVLVDDYNINVHKFISLKYDNSTAVFSIDDYIKCLKIFEPDIFCIPCEEIKINEQVGKKKKNRIINLMNEFLEKVQIIKNTNLSNSLCILSIPCTVDIDTVITETINKYDSIIDGILLSGLGYDESNETRTNAFKNILNILPNNKLKFIQLSNGNPIEILHAIYHGIDVIEPNFPYYLAKNGKAINMNLKMDNLQDGNEYNLQDKNNDNIYDINLLDFKNDVNFIIDLNNPKYVLDHSTITCNSPRKESKSYIHHLLKCHELTAHVILTYHNLYIYRSFFQEIQLHIKENNFLSYINWFIEKNELNKKEE.

Belongs to the queuine tRNA-ribosyltransferase family.

The protein is Queuine tRNA-ribosyltransferase-like protein of Plasmodium falciparum (isolate 3D7).